The following is a 246-amino-acid chain: Virulence plasmid protein pGP6-D (246 aa).

It belongs to the UPF0137 (pGP6-D) family.

This is Virulence plasmid protein pGP6-D from Chlamydia psittaci (Chlamydophila psittaci).